Consider the following 75-residue polypeptide: Large ribosomal subunit protein bL32c (75 aa).

The interval 49–75 (SPGPTTPIKPNPKKQTGRRPRSQRRRT) is disordered. Basic residues predominate over residues 59–75 (NPKKQTGRRPRSQRRRT).

This sequence belongs to the bacterial ribosomal protein bL32 family.

It is found in the plastid. Its subcellular location is the chloroplast. This Nephroselmis olivacea (Green alga) protein is Large ribosomal subunit protein bL32c.